Reading from the N-terminus, the 513-residue chain is ATP synthase subunit alpha (513 aa).

169 to 176 (GDRQTGKT) is an ATP binding site.

It belongs to the ATPase alpha/beta chains family. In terms of assembly, F-type ATPases have 2 components, CF(1) - the catalytic core - and CF(0) - the membrane proton channel. CF(1) has five subunits: alpha(3), beta(3), gamma(1), delta(1), epsilon(1). CF(0) has three main subunits: a(1), b(2) and c(9-12). The alpha and beta chains form an alternating ring which encloses part of the gamma chain. CF(1) is attached to CF(0) by a central stalk formed by the gamma and epsilon chains, while a peripheral stalk is formed by the delta and b chains.

Its subcellular location is the cell inner membrane. It carries out the reaction ATP + H2O + 4 H(+)(in) = ADP + phosphate + 5 H(+)(out). Functionally, produces ATP from ADP in the presence of a proton gradient across the membrane. The alpha chain is a regulatory subunit. The protein is ATP synthase subunit alpha of Tolumonas auensis (strain DSM 9187 / NBRC 110442 / TA 4).